Here is a 392-residue protein sequence, read N- to C-terminus: O-phospho-L-seryl-tRNA:Cys-tRNA synthase 1 (392 aa).

Pyridoxal 5'-phosphate is bound by residues 85–86 (AR), asparagine 190, and 213–215 (SGH). An N6-(pyridoxal phosphate)lysine modification is found at lysine 216.

This sequence belongs to the SepCysS family. In terms of assembly, homodimer. Interacts with SepRS. Requires pyridoxal 5'-phosphate as cofactor.

It catalyses the reaction O-phospho-L-seryl-tRNA(Cys) + hydrogen sulfide + H(+) = L-cysteinyl-tRNA(Cys) + phosphate. Converts O-phospho-L-seryl-tRNA(Cys) (Sep-tRNA(Cys)) to L-cysteinyl-tRNA(Cys) (Cys-tRNA(Cys)). This chain is O-phospho-L-seryl-tRNA:Cys-tRNA synthase 1, found in Methanoregula boonei (strain DSM 21154 / JCM 14090 / 6A8).